A 190-amino-acid polypeptide reads, in one-letter code: MIFRCCFEGCGKSFPRRAKLSDHLNTHTRSRPYKCDMCEKSYMKNGHLSVHKKKHFPPELACERCGYMCHTRDRLHKHQKACLEYKCGICGKRYRKRSWFDVHVESHHVKVFNAPRSKHVCEYCKFEFNKKSNLSTHVRSVHLLMKPFKCPCGKEYAHNASLDRHRKKCASWSYPGLDVAKPPAASNSLL.

4 consecutive C2H2-type zinc fingers follow at residues 4–27 (RCCFEGCGKSFPRRAKLSDHLNTH), 33–55 (YKCDMCEKSYMKNGHLSVHKKKH), 85–108 (YKCGICGKRYRKRSWFDVHVESHH), and 119–142 (HVCEYCKFEFNKKSNLSTHVRSVH).

In Encephalitozoon cuniculi (strain GB-M1) (Microsporidian parasite), this protein is Zinc finger C2H2 protein ECU03_0790.